A 194-amino-acid polypeptide reads, in one-letter code: MNLEALLDTVPAYARDLKLNFSAVVRQNTELTEQQLWGTVVACAAASRNRTLLDAIVEEAKGKLSAQAVEAAKGAAAILSMNNIFYRFQHLAVNKKYETMRAGLRMNFLRQHGVDPLDFELWALAVSAVNGCGKCIDAHERVLLQKEFSEEKILAAIRVASTIYGLAVVFDAEEPKGDLVGAPVNTDAYSTTTI.

Residue Cys132 is the Proton donor of the active site. A disulfide bridge connects residues Cys132 and Cys135. The active-site Cysteine sulfenic acid (-SOH) intermediate is Cys135.

The protein belongs to the AhpD family.

It catalyses the reaction N(6)-[(R)-dihydrolipoyl]-L-lysyl-[lipoyl-carrier protein] + a hydroperoxide = N(6)-[(R)-lipoyl]-L-lysyl-[lipoyl-carrier protein] + an alcohol + H2O. In terms of biological role, antioxidant protein with alkyl hydroperoxidase activity. Required for the reduction of the AhpC active site cysteine residues and for the regeneration of the AhpC enzyme activity. The sequence is that of Alkyl hydroperoxide reductase AhpD from Koribacter versatilis (strain Ellin345).